Reading from the N-terminus, the 516-residue chain is L-amino-acid oxidase (516 aa).

The N-terminal stretch at 1–18 is a signal peptide; that stretch reads MNVFFMFSLLFLAALGSC. A disulfide bridge connects residues cysteine 28 and cysteine 191. FAD is bound by residues 61–62, 81–82, arginine 89, and 105–108; these read MS, EA, and GPMR. Arginine 108 is a substrate binding site. N-linked (GlcNAc...) asparagine glycosylation occurs at asparagine 190. Histidine 241 lines the substrate pocket. Valine 279 contributes to the FAD binding site. Cysteine 349 and cysteine 430 are joined by a disulfide. The N-linked (GlcNAc...) asparagine glycan is linked to asparagine 379. Residue tyrosine 390 coordinates substrate. FAD-binding positions include glutamate 475, 481–486, and 482–487; these read HGWIDS and GWIDSS. Substrate is bound by residues 481-482 and 482-483; these read HG and GW.

It belongs to the flavin monoamine oxidase family. FIG1 subfamily. In terms of assembly, homodimer; non-covalently linked. The cofactor is FAD. Post-translationally, N-glycosylated. As to expression, expressed by the venom gland.

The protein localises to the secreted. It carries out the reaction an L-alpha-amino acid + O2 + H2O = a 2-oxocarboxylate + H2O2 + NH4(+). Functionally, catalyzes an oxidative deamination of predominantly hydrophobic and aromatic L-amino acids, thus producing hydrogen peroxide that may contribute to the diverse toxic effects of this enzyme. Exhibits diverse biological activities, such as hemorrhage, hemolysis, edema, apoptosis of vascular endothelial cells or tumor cell lines, antibacterial and antiparasitic activities, as well as regulation of platelet aggregation. Effects of snake L-amino oxidases on platelets are controversial, since they either induce aggregation or inhibit agonist-induced aggregation. These different effects are probably due to different experimental conditions. Displays dose-dependent inhibition on HIV-1 infection and replication. This chain is L-amino-acid oxidase, found in Trimeresurus stejnegeri (Chinese green tree viper).